We begin with the raw amino-acid sequence, 216 residues long: Probable disulfide bond formation protein D (216 aa).

An N-terminal signal peptide occupies residues 1 to 25 (MKSNKLMALGIVFSIAVLIVIGTIA). A disulfide bond links Cys65 and Cys68.

It belongs to the thioredoxin family. DsbA subfamily.

Its function is as follows. May be required for disulfide bond formation in some proteins. The polypeptide is Probable disulfide bond formation protein D (bdbD) (Bacillus cereus (strain ATCC 14579 / DSM 31 / CCUG 7414 / JCM 2152 / NBRC 15305 / NCIMB 9373 / NCTC 2599 / NRRL B-3711)).